Reading from the N-terminus, the 212-residue chain is Ras-related protein Rab-2A (212 aa).

GTP is bound by residues Gly-16, Val-17, Gly-18, Lys-19, Ser-20, Cys-21, and Thr-38. Ser-20 provides a ligand contact to Mg(2+). A Switch 1 motif is present at residues 37–42; the sequence is LTIGVE. Mg(2+) is bound by residues Thr-38 and Asp-61. Residues 63–72 carry the Switch 2 motif; the sequence is AGQESFRSIT. GTP is bound by residues Gly-64, Asn-119, Lys-120, Asp-122, Ala-150, and Lys-151. 2 S-geranylgeranyl cysteine lipidation sites follow: Cys-211 and Cys-212.

The protein belongs to the small GTPase superfamily. Rab family. As to quaternary structure, interacts with PRKCI. Interacts with TRIP11. Interacts (in GTP-bound form) with GARIN1B. Mg(2+) serves as cofactor. In terms of processing, prenylated. Prenylation is required for association with cellular membranes.

It is found in the endoplasmic reticulum-Golgi intermediate compartment membrane. The protein resides in the melanosome. It localises to the endoplasmic reticulum membrane. Its subcellular location is the golgi apparatus membrane. The protein localises to the cytoplasmic vesicle. It is found in the secretory vesicle. The protein resides in the acrosome. The enzyme catalyses GTP + H2O = GDP + phosphate + H(+). Its activity is regulated as follows. Regulated by guanine nucleotide exchange factors (GEFs) which promote the exchange of bound GDP for free GTP, GTPase activating proteins (GAPs) which increase the GTP hydrolysis activity, and GDP dissociation inhibitors (GDIs) which inhibit the dissociation of the nucleotide from the GTPase. Functionally, the small GTPases Rab are key regulators of intracellular membrane trafficking, from the formation of transport vesicles to their fusion with membranes. Rabs cycle between active GTP-bound and inactive GDP-bound states. In their active state, drive transport of vesicular carriers from donor organelles to acceptor organelles to regulate the membrane traffic that maintains organelle identity and morphology. RAB2A regulates autophagy by promoting autophagosome-lysosome fusion via recruitment of the HOPS endosomal tethering complex; this process involves autophagosomal RAB2A and lysosomal RAB39A recruitment of HOPS subcomplexes VPS39-VPS11 and VPS41-VPS16-VPS18-VPS33A, respectively, which assemble into a functional complex to mediate membrane tethering and SNAREs-driven membrane fusion. Required for protein transport from the endoplasmic reticulum to the Golgi complex. Regulates the compacted morphology of the Golgi. Together with RAB2B, redundantly required for efficient autophagic flux. The sequence is that of Ras-related protein Rab-2A (RAB2A) from Gallus gallus (Chicken).